A 556-amino-acid chain; its full sequence is MGQDTDMLNTYQQLVRTPSVRPGQDVRLQAPGTRTGLLKLLSTVSQDKQGCLGSGDGVPNQDLQQRSQSSRQTAKKDRKPRGQSKKGQGSEESEDHFPLLPRKPSFPFQWAWESIATDVRAVLQPSSPTPGHQALPMPSSFSQRQSRRKSTANLPEAHGCCWKTEAQNLKARQQLGAWGGVSIPTGKGELGSEPPSGLQLPGRRPGSGSASDKQVQLQSLGAEEAERGLSSGVLPQRPRRGSISEEEQFSEATEEAEEGEHRTPCRRRAGCQRKGQISGEEASDEGEVQGQSQGSSPSFNNLRRRQWRKTRAKELQGPWDLEKLHRQLQRDLDCGPQKLPWKTLRAAFQASKRNGKAYASGYDETFVSANLPNRTFHKRQEATRSLLQAWERQRQEERQQAELRRARTQHVQRQVAHCLAAYAPRGSRGPGAAQRKLEELRRQERQRFAEYQAELQGIQHRVQARPFLFQQAMQANARLTVTRRFSQVLSALGLDEEQLLSEAGKVDREGTPRKPRSHRSMGVRMEHSPQRPPRTEPTGSQPDRHYNPSLDPECSP.

Positions Met-1–Arg-16 are enriched in polar residues. Disordered stretches follow at residues Met-1–Pro-31, Gly-50–Arg-102, Leu-123–Pro-155, and Gly-179–Lys-309. The span at Gly-208–Ser-219 shows a compositional bias: polar residues. Positions Ser-244–Glu-258 are enriched in acidic residues. Polar residues predominate over residues Gln-289–Asn-301. A coiled-coil region spans residues Arg-379–Ala-464. The disordered stretch occupies residues Ala-503–Pro-556.

The protein is Testis-specific protein 10-interacting protein (TSGA10IP) of Homo sapiens (Human).